Consider the following 374-residue polypeptide: N-acetyldiaminopimelate deacetylase (374 aa).

D69 is an active-site residue. Catalysis depends on E128, which acts as the Proton acceptor.

Belongs to the peptidase M20A family. N-acetyldiaminopimelate deacetylase subfamily.

It carries out the reaction N-acetyl-(2S,6S)-2,6-diaminopimelate + H2O = (2S,6S)-2,6-diaminopimelate + acetate. Its pathway is amino-acid biosynthesis; L-lysine biosynthesis via DAP pathway; LL-2,6-diaminopimelate from (S)-tetrahydrodipicolinate (acetylase route): step 3/3. Functionally, catalyzes the conversion of N-acetyl-diaminopimelate to diaminopimelate and acetate. The chain is N-acetyldiaminopimelate deacetylase from Bacillus velezensis (strain DSM 23117 / BGSC 10A6 / LMG 26770 / FZB42) (Bacillus amyloliquefaciens subsp. plantarum).